Here is a 210-residue protein sequence, read N- to C-terminus: Ribosomal RNA small subunit methyltransferase G (210 aa).

S-adenosyl-L-methionine contacts are provided by residues G75, F80, 98-100 (EST), 126-127 (AE), and R141.

Belongs to the methyltransferase superfamily. RNA methyltransferase RsmG family.

Its subcellular location is the cytoplasm. In terms of biological role, specifically methylates the N7 position of a guanine in 16S rRNA. This is Ribosomal RNA small subunit methyltransferase G from Solibacter usitatus (strain Ellin6076).